Here is a 681-residue protein sequence, read N- to C-terminus: Potassium-transporting ATPase ATP-binding subunit (681 aa).

A run of 4 helical transmembrane segments spans residues 37–57 (MFVVEVGTFITLLATIFPTYF), 64–84 (VGYNALVTFILFVTVLFANFA), 218–238 (IALTTVLVSLTIIFIVVVMTL), and 255–275 (IALLVCLIPTTIGGLLSAIGI). Asp306 functions as the 4-aspartylphosphate intermediate in the catalytic mechanism. Residues Asp343, Glu347, 375 to 382 (FSAETRMS), and Lys394 contribute to the ATP site. 2 residues coordinate Mg(2+): Asp517 and Asp521. Transmembrane regions (helical) follow at residues 573 to 595 (ALTTFSIANDVAKYFAILPAIIS), 615 to 635 (AILSALIYNAIIIPILIPIAM), and 655 to 675 (IYGLGGLIAPFVGIKLIDMII).

Belongs to the cation transport ATPase (P-type) (TC 3.A.3) family. Type IA subfamily. The system is composed of three essential subunits: KdpA, KdpB and KdpC.

The protein localises to the cell membrane. It catalyses the reaction K(+)(out) + ATP + H2O = K(+)(in) + ADP + phosphate + H(+). Its function is as follows. Part of the high-affinity ATP-driven potassium transport (or Kdp) system, which catalyzes the hydrolysis of ATP coupled with the electrogenic transport of potassium into the cytoplasm. This subunit is responsible for energy coupling to the transport system and for the release of the potassium ions to the cytoplasm. The polypeptide is Potassium-transporting ATPase ATP-binding subunit (Caldanaerobacter subterraneus subsp. tengcongensis (strain DSM 15242 / JCM 11007 / NBRC 100824 / MB4) (Thermoanaerobacter tengcongensis)).